The following is a 516-amino-acid chain: Nondiscriminating glutamyl-tRNA synthetase EARS2, mitochondrial (516 aa).

The N-terminal 39 residues, 1–39 (MRPAFIRGKWLSRTLELATGLGRRTCSSRESGREVRVRF), are a transit peptide targeting the mitochondrion. Residue 38–40 (RFA) coordinates L-glutamate. The 'HIGH' region motif lies at 43 to 51 (PTGFLHLGG). An ATP-binding site is contributed by histidine 48. Residues glutamate 74, 226-230 (YHLAN), and arginine 244 each bind L-glutamate. ATP is bound by residues glutamate 247 and 282–286 (KLSKR). Positions 282–286 (KLSKR) match the 'KMSKS' region motif.

The protein belongs to the class-I aminoacyl-tRNA synthetase family. Glutamate--tRNA ligase type 1 subfamily.

Its subcellular location is the mitochondrion matrix. It catalyses the reaction tRNA(Glx) + L-glutamate + ATP = L-glutamyl-tRNA(Glx) + AMP + diphosphate. The catalysed reaction is tRNA(Glu) + L-glutamate + ATP = L-glutamyl-tRNA(Glu) + AMP + diphosphate. The enzyme catalyses tRNA(Gln) + L-glutamate + ATP = L-glutamyl-tRNA(Gln) + AMP + diphosphate. Its function is as follows. Non-discriminating glutamyl-tRNA synthetase that catalyzes aminoacylation of both mitochondrial tRNA(Glu) and tRNA(Gln) and participates in RNA aminoacylation for mitochondrial protein translation. Attachs glutamate to tRNA(Glu) or tRNA(Gln) in a two-step reaction: glutamate is first activated by ATP to form Glu-AMP and then transferred to the acceptor end of tRNA(Glu) or tRNA(Gln). The sequence is that of Nondiscriminating glutamyl-tRNA synthetase EARS2, mitochondrial from Xenopus tropicalis (Western clawed frog).